A 154-amino-acid chain; its full sequence is Aspartate carbamoyltransferase regulatory chain (154 aa).

Zn(2+) is bound by residues Cys-109, Cys-114, Cys-138, and Cys-141.

Belongs to the PyrI family. As to quaternary structure, contains catalytic and regulatory chains. Zn(2+) is required as a cofactor.

Its function is as follows. Involved in allosteric regulation of aspartate carbamoyltransferase. This Yersinia enterocolitica serotype O:8 / biotype 1B (strain NCTC 13174 / 8081) protein is Aspartate carbamoyltransferase regulatory chain.